Here is a 662-residue protein sequence, read N- to C-terminus: Interferon-induced GTP-binding protein Mx1 (662 aa).

Methionine 1 is modified (N-acetylmethionine). Residues 67–340 (DLALPAIAVI…LITHICKSLP (274 aa)) enclose the Dynamin-type G domain. Residues 77–84 (GDQSSGKS) form a G1 motif region. Residue 77–84 (GDQSSGKS) participates in GTP binding. Positions 102–104 (VTR) are G2 motif. Positions 178 to 181 (DLPG) are G3 motif. GTP is bound by residues 178–182 (DLPGI) and 247–250 (TKPD). Positions 247-250 (TKPD) are G4 motif. The segment at 279–282 (KCRG) is G5 motif. A bundle signaling element (BSE) region spans residues 341–366 (LLENQIRESHQRITEELQKYGVDVPE). The segment at 366 to 533 (EDENEKMFFL…HFQMEQIVYC (168 aa)) is middle domain. The interval 367–632 (DENEKMFFLI…KDTYSWLLKE (266 aa)) is stalk. The segment at 554 to 557 (KKKK) is critical for lipid-binding. The 89-residue stretch at 574–662 (MEEIFQHLMA…ARRRLAQFPG (89 aa)) folds into the GED domain.

The protein belongs to the TRAFAC class dynamin-like GTPase superfamily. Dynamin/Fzo/YdjA family. Homooligomer. Oligomerizes into multimeric filamentous or ring-like structures by virtue of its stalk domain. Oligomerization is critical for GTPase activity, protein stability, and recognition of viral target structures. Interacts with TRPC1, TRPC3, TRPC4, TRPC5, TRPC6 and TRPC7. Interacts with HSPA5. Interacts with TUBB/TUBB5. Interacts with DDX39A and DDX39B. ISGylated.

The protein localises to the cytoplasm. Its subcellular location is the endoplasmic reticulum membrane. It localises to the perinuclear region. Functionally, interferon-induced dynamin-like GTPase with antiviral activity. The chain is Interferon-induced GTP-binding protein Mx1 (MX1) from Pongo abelii (Sumatran orangutan).